A 130-amino-acid chain; its full sequence is Small ribosomal subunit protein uS8 (130 aa).

This sequence belongs to the universal ribosomal protein uS8 family. Part of the 30S ribosomal subunit. Contacts proteins S5 and S12.

One of the primary rRNA binding proteins, it binds directly to 16S rRNA central domain where it helps coordinate assembly of the platform of the 30S subunit. The sequence is that of Small ribosomal subunit protein uS8 from Stutzerimonas stutzeri (strain A1501) (Pseudomonas stutzeri).